Consider the following 450-residue polypeptide: Phosphoglucosamine mutase (450 aa).

Residue Ser101 is the Phosphoserine intermediate of the active site. Ser101, Asp243, Asp245, and Asp247 together coordinate Mg(2+). Ser101 carries the phosphoserine modification.

It belongs to the phosphohexose mutase family. It depends on Mg(2+) as a cofactor. In terms of processing, activated by phosphorylation.

The enzyme catalyses alpha-D-glucosamine 1-phosphate = D-glucosamine 6-phosphate. Its function is as follows. Catalyzes the conversion of glucosamine-6-phosphate to glucosamine-1-phosphate. The protein is Phosphoglucosamine mutase of Desulfotalea psychrophila (strain LSv54 / DSM 12343).